A 263-amino-acid polypeptide reads, in one-letter code: 5'-nucleotidase SurE (263 aa).

Asp10, Asp11, Ser41, and Asn95 together coordinate a divalent metal cation.

This sequence belongs to the SurE nucleotidase family. The cofactor is a divalent metal cation.

It localises to the cytoplasm. It carries out the reaction a ribonucleoside 5'-phosphate + H2O = a ribonucleoside + phosphate. Functionally, nucleotidase that shows phosphatase activity on nucleoside 5'-monophosphates. The chain is 5'-nucleotidase SurE from Methanoculleus marisnigri (strain ATCC 35101 / DSM 1498 / JR1).